We begin with the raw amino-acid sequence, 324 residues long: uncharacterized protein (324 aa).

The region spanning 1 to 58 is the HTH lysR-type domain; the sequence is MDIKVMEYAAEIARRQSFTKAAEHLHIAQPSLSQQIKKLEAELGLTLFHRSHGSVTLT. The H-T-H motif DNA-binding region spans 18–37; that stretch reads FTKAAEHLHIAQPSLSQQIK.

It belongs to the LysR transcriptional regulatory family.

This is an uncharacterized protein from Bacillus subtilis (strain 168).